The chain runs to 265 residues: Ubiquinone biosynthesis protein COQ4 homolog, mitochondrial (265 aa).

Zn(2+) is bound by residues His162, Asp163, His166, and Glu178.

The protein belongs to the COQ4 family. Component of a multi-subunit COQ enzyme complex. Requires Zn(2+) as cofactor.

The protein resides in the mitochondrion inner membrane. The enzyme catalyses a 4-hydroxy-3-methoxy-5-(all-trans-polyprenyl)benzoate + H(+) = a 2-methoxy-6-(all-trans-polyprenyl)phenol + CO2. It participates in cofactor biosynthesis; ubiquinone biosynthesis. Lyase that catalyzes the C1-decarboxylation of 4-hydroxy-3-methoxy-5-(all-trans-polyprenyl)benzoic acid into 2-methoxy-6-(all-trans-polyprenyl)phenol during ubiquinone biosynthesis. This Drosophila willistoni (Fruit fly) protein is Ubiquinone biosynthesis protein COQ4 homolog, mitochondrial.